We begin with the raw amino-acid sequence, 953 residues long: Protein translocase subunit SecA (953 aa).

Residues Gln-84, 102-106 (GEGKT), and Asp-491 each bind ATP. Positions 832–953 (EPEPAPEQPS…RAEAKKNKRR (122 aa)) are disordered. The span at 841-865 (SVPVSVSRSAEPTPDLQAAAEAAAA) shows a compositional bias: low complexity. Over residues 898 to 907 (KGLDAPEKQR) the composition is skewed to basic and acidic residues. Polar residues predominate over residues 908-934 (LNYSGPTEQGGVQTTSESAGEQGNGTS). Positions 940-953 (RAAARAEAKKNKRR) are enriched in basic and acidic residues.

The protein belongs to the SecA family. In terms of assembly, monomer and homodimer. Part of the essential Sec protein translocation apparatus which comprises SecA, SecYEG and auxiliary proteins SecDF. Other proteins may also be involved.

It is found in the cell membrane. The protein resides in the cytoplasm. The catalysed reaction is ATP + H2O + cellular proteinSide 1 = ADP + phosphate + cellular proteinSide 2.. In terms of biological role, part of the Sec protein translocase complex. Interacts with the SecYEG preprotein conducting channel. Has a central role in coupling the hydrolysis of ATP to the transfer of proteins into and across the cell membrane, serving as an ATP-driven molecular motor driving the stepwise translocation of polypeptide chains across the membrane. The chain is Protein translocase subunit SecA from Saccharopolyspora erythraea (strain ATCC 11635 / DSM 40517 / JCM 4748 / NBRC 13426 / NCIMB 8594 / NRRL 2338).